A 207-amino-acid polypeptide reads, in one-letter code: Dephospho-CoA kinase (207 aa).

The 200-residue stretch at 4 to 203 (VIGLTGGIAS…EEGYIEKPNY (200 aa)) folds into the DPCK domain. 12–17 (ASGKST) is an ATP binding site.

It belongs to the CoaE family.

The protein resides in the cytoplasm. It catalyses the reaction 3'-dephospho-CoA + ATP = ADP + CoA + H(+). It participates in cofactor biosynthesis; coenzyme A biosynthesis; CoA from (R)-pantothenate: step 5/5. In terms of biological role, catalyzes the phosphorylation of the 3'-hydroxyl group of dephosphocoenzyme A to form coenzyme A. The polypeptide is Dephospho-CoA kinase (Staphylococcus aureus (strain MRSA252)).